A 423-amino-acid chain; its full sequence is Serine--tRNA ligase (423 aa).

Composition is skewed to basic and acidic residues over residues 1–24 (MIDL…RGED) and 62–71 (KMRDASPEEK). Residues 1–71 (MIDLKQLRDD…KMRDASPEEK (71 aa)) form a disordered region. 230–232 (TSE) contributes to the L-serine binding site. ATP is bound by residues 261–263 (RRE) and Val-277. Glu-284 lines the L-serine pocket. 348–351 (ELTS) is a binding site for ATP. Thr-383 is an L-serine binding site.

It belongs to the class-II aminoacyl-tRNA synthetase family. Type-1 seryl-tRNA synthetase subfamily. As to quaternary structure, homodimer. The tRNA molecule binds across the dimer.

The protein resides in the cytoplasm. It catalyses the reaction tRNA(Ser) + L-serine + ATP = L-seryl-tRNA(Ser) + AMP + diphosphate + H(+). It carries out the reaction tRNA(Sec) + L-serine + ATP = L-seryl-tRNA(Sec) + AMP + diphosphate + H(+). Its pathway is aminoacyl-tRNA biosynthesis; selenocysteinyl-tRNA(Sec) biosynthesis; L-seryl-tRNA(Sec) from L-serine and tRNA(Sec): step 1/1. Functionally, catalyzes the attachment of serine to tRNA(Ser). Is also able to aminoacylate tRNA(Sec) with serine, to form the misacylated tRNA L-seryl-tRNA(Sec), which will be further converted into selenocysteinyl-tRNA(Sec). This Corynebacterium kroppenstedtii (strain DSM 44385 / JCM 11950 / CIP 105744 / CCUG 35717) protein is Serine--tRNA ligase.